Here is a 151-residue protein sequence, read N- to C-terminus: Small ribosomal subunit protein uS15 (151 aa).

Belongs to the universal ribosomal protein uS15 family.

This Lumbricus rubellus (Humus earthworm) protein is Small ribosomal subunit protein uS15 (RPS13).